The sequence spans 1164 residues: Avirulence protein AvrBs3 (1164 aa).

Disordered stretches follow at residues 1-68 and 128-152; these read MDPI…SAGS and ARPP…PAAQ. Over residues 131–141 the composition is skewed to basic residues; the sequence is PRAKPAPRRRA. Low complexity predominate over residues 142–151; the sequence is AQPSDASPAA. One copy of the Cryptic repeat -1 repeat lies at 225 to 254; that stretch reads IVGVGKQWSGARALEALLTVAGELRGPPLQ. Residues 255–288 form a Cryptic repeat 0 repeat; it reads LDTGQLLKIAKRGGVTAVEAVHAWRNALTGAPLN. Core repeat repeat units lie at residues 289–322, 323–356, 357–390, 391–424, 425–458, 459–492, 493–526, 527–560, 561–594, 595–628, 629–662, 663–696, 697–730, 731–764, 765–798, 799–832, and 833–866; these read LTPE…QAHG and LTPQ…QAHG. The stretch at 867–886 is one Core repeat 17.5 repeat; sequence LTPQQVVAIASNGGGRPALE. Residues 1021-1024 carry the Nuclear localization signal NLS1 motif; it reads KRAK. Residues 1048–1060 are compositionally biased toward basic and acidic residues; the sequence is DLDAPSPMHEGDQ. The disordered stretch occupies residues 1048 to 1091; that stretch reads DLDAPSPMHEGDQTRASSRKRSRSDRAVTGPSAQQSFEVRVPEQ. The short motif at 1067–1070 is the Nuclear localization signal NLS2 element; it reads KRSR. A Nuclear localization signal NLS3 motif is present at residues 1104–1107; that stretch reads KRPR. The tract at residues 1135–1164 is acidic activation domain AAD; that stretch reads QDEDPFAGAADDFPAFNEEELAWLMELLPQ.

This sequence belongs to the transcription activator-like effector (TALE) family. Forms a homodimer in the plant cell cytoplasm, prior to nuclear import. Interacts with the plant cell importin alpha-1 (Caimp alpha-1) and importin alpha-2 (Caimp alpha-2) via the nuclear localization signal NLS2, but not via NLS3.

The protein resides in the secreted. Its subcellular location is the host nucleus. Avirulence protein. Acts as a transcription factor in C.annuum plants. In susceptible plants lacking the Bs3 resistance gene induces expression of a number of genes, including genes homologous to a family of auxin-induced genes, alpha-expansin genes, pectate lyase, anthocyanidin glucoside rhamnosyl transferase and at least one transcription factor, UPA20. Their expression leads to plant hypertrophy in mesophyll cells, probably mainly mediated by UPA20. In resistant plants induces the hypersensitive response (HR), by inducing transcription of plant Bs3 which induces HR; a mutated AvrBs3 missing repeats 11-14 does not induce expression of Bs3 but does induce Bs3-E, a Bs3 allele with a modified promoter. Binds DNA corresponding to the upa-box in sequence-specific manner. The polypeptide is Avirulence protein AvrBs3 (avrBs3) (Xanthomonas euvesicatoria).